The sequence spans 202 residues: Recoverin (202 aa).

Gly-2 is lipidated: N-myristoyl glycine. Cysteine sulfenic acid (-SOH) is present on Cys-39. EF-hand domains are found at residues 41–59 (SGRITKQEFQSIYSKFFPE), 61–96 (DPKAYAQHVFRSFDANSDGTLDFKEYVIALHMTSAG), 97–132 (KTNQKLEWAFSLYDVDGNGAISKSEVLEIVMAIFKM), and 147–182 (TPEKRAEKIWGFFGKKDDDKLTEEEFIEGTLANKEI). Ca(2+) contacts are provided by Asp-74, Asn-76, Asp-78, Thr-80, Glu-85, Asp-110, Asp-112, Asn-114, and Glu-121. Residues 189-192 (EPRK) form an interaction with GRK1 region.

This sequence belongs to the recoverin family. In terms of assembly, homodimer; disulfide-linked. Homodimerization is caused by prolonged intense illumination. May form a complex composed of RHO, GRK1 and RCVRN in a Ca(2+)-dependent manner; RCVRN prevents the interaction between GRK1 and RHO. Interacts (via C-terminus) with GRK1 (via N-terminus); the interaction is Ca(2+)-dependent. Post-translationally, the N-terminal glycine is linked to one of four different types of acyl groups. The most abundant is myristoleate (14:1), but 14:0, 14:2, and 12:0 acyl residues are also present. The Ca(2+) induced exposure of the myristoyl group, known as the calcium-myristoyl switch, promotes RCVRN binding to the photoreceptor cell membranes only when intracellular Ca(2+) concentration is high. In terms of processing, oxidation on Cys-39 occurs in response to prolonged intense illumination and results in the formation of disulfide homodimers, and to a lesser extent disulfide-linked heterodimers.

It localises to the photoreceptor inner segment. The protein resides in the cell projection. Its subcellular location is the cilium. The protein localises to the photoreceptor outer segment. It is found in the photoreceptor outer segment membrane. It localises to the perikaryon. Its function is as follows. Acts as a calcium sensor and regulates phototransduction of cone and rod photoreceptor cells. Modulates light sensitivity of cone photoreceptor in dark and dim conditions. In response to high Ca(2+) levels induced by low light levels, prolongs RHO/rhodopsin activation in rod photoreceptor cells by binding to and inhibiting GRK1-mediated phosphorylation of RHO/rhodopsin. Plays a role in scotopic vision/enhances vision in dim light by enhancing signal transfer between rod photoreceptors and rod bipolar cells. Improves rod photoreceptor sensitivity in dim light and mediates response of rod photoreceptors to facilitate detection of change and motion in bright light. The chain is Recoverin (RCVRN) from Canis lupus familiaris (Dog).